A 424-amino-acid polypeptide reads, in one-letter code: Kynureninase (424 aa).

Pyridoxal 5'-phosphate is bound by residues Leu109, Thr110, 137–140 (FPSD), Asp222, His225, and Tyr247. Lys248 carries the post-translational modification N6-(pyridoxal phosphate)lysine. Positions 278 and 306 each coordinate pyridoxal 5'-phosphate.

It belongs to the kynureninase family. Homodimer. The cofactor is pyridoxal 5'-phosphate.

It catalyses the reaction L-kynurenine + H2O = anthranilate + L-alanine + H(+). It carries out the reaction 3-hydroxy-L-kynurenine + H2O = 3-hydroxyanthranilate + L-alanine + H(+). It participates in amino-acid degradation; L-kynurenine degradation; L-alanine and anthranilate from L-kynurenine: step 1/1. Its pathway is cofactor biosynthesis; NAD(+) biosynthesis; quinolinate from L-kynurenine: step 2/3. Functionally, catalyzes the cleavage of L-kynurenine (L-Kyn) and L-3-hydroxykynurenine (L-3OHKyn) into anthranilic acid (AA) and 3-hydroxyanthranilic acid (3-OHAA), respectively. This chain is Kynureninase, found in Koribacter versatilis (strain Ellin345).